The primary structure comprises 206 residues: Alpha-amylase/trypsin inhibitor (206 aa).

8 disulfides stabilise this stretch: Cys9-Cys205, Cys51-Cys61, Cys66-Cys72, Cys118-Cys194, Cys124-Cys177, Cys132-Cys142, Cys146-Cys155, and Cys156-Cys164.

This sequence belongs to the thaumatin family.

Its function is as follows. Inhibits both trypsin and alpha-amylase. Inhibits the growth of some plant fungal pathogens. The chain is Alpha-amylase/trypsin inhibitor from Zea mays (Maize).